A 518-amino-acid chain; its full sequence is Membrane-bound lytic murein transglycosylase F (518 aa).

The first 21 residues, 1-21 (MKKLKINYLFIGILALLLAVA), serve as a signal peptide directing secretion. Residues 22–269 (LWPSIPWFGK…RIEEKYLGHG (248 aa)) are non-LT domain. The tract at residues 270–518 (DDFDYVDTRT…SRKGSEEKQN (249 aa)) is LT domain. Residue Glu314 is part of the active site.

This sequence in the N-terminal section; belongs to the bacterial solute-binding protein 3 family. The protein in the C-terminal section; belongs to the transglycosylase Slt family.

It localises to the cell outer membrane. It catalyses the reaction Exolytic cleavage of the (1-&gt;4)-beta-glycosidic linkage between N-acetylmuramic acid (MurNAc) and N-acetylglucosamine (GlcNAc) residues in peptidoglycan, from either the reducing or the non-reducing ends of the peptidoglycan chains, with concomitant formation of a 1,6-anhydrobond in the MurNAc residue.. Murein-degrading enzyme that degrades murein glycan strands and insoluble, high-molecular weight murein sacculi, with the concomitant formation of a 1,6-anhydromuramoyl product. Lytic transglycosylases (LTs) play an integral role in the metabolism of the peptidoglycan (PG) sacculus. Their lytic action creates space within the PG sacculus to allow for its expansion as well as for the insertion of various structures such as secretion systems and flagella. This chain is Membrane-bound lytic murein transglycosylase F, found in Escherichia coli O6:K15:H31 (strain 536 / UPEC).